A 349-amino-acid chain; its full sequence is Mitochondrial carrier protein SCaMC-3L (349 aa).

4 helical membrane passes run 88–104 (GALWKFLLSGAMAGAVS), 149–168 (GNGINVLKIAPEYAIKFSVF), 188–205 (LLAGSLAVATSQTLINPM), and 243–261 (YLPNMLGIIPYACTDLAVY). Solcar repeat units follow at residues 88-174 (GALW…CKNY) and 182-267 (PPFQ…LNCL).

It belongs to the mitochondrial carrier (TC 2.A.29) family.

Its subcellular location is the mitochondrion inner membrane. It catalyses the reaction Mg(2+)(out) + phosphate(in) + ATP(out) = Mg(2+)(in) + phosphate(out) + ATP(in). It carries out the reaction ADP(out) + phosphate(in) + H(+)(out) = ADP(in) + phosphate(out) + H(+)(in). Functionally, calcium-independent ATP-Mg/Pi exchanger that catalyzes the electroneutral exchange of Mg-ATP or free ADP against an hydrogenphosphate and participates in the net transport of adenine nucleotides across the mitochondria inner membrane. The polypeptide is Mitochondrial carrier protein SCaMC-3L (Bos taurus (Bovine)).